The primary structure comprises 154 residues: Yop proteins translocation protein O (154 aa).

Residues glutamate 132–alanine 154 are disordered.

The protein belongs to the SpaM family.

Its function is as follows. Component of the yop secretion machinery. This chain is Yop proteins translocation protein O (yscO), found in Yersinia pseudotuberculosis serotype I (strain IP32953).